Consider the following 199-residue polypeptide: Recombination protein RecR (199 aa).

Residues 57–72 (CEICGNMDTENICRIC) form a C4-type zinc finger. Positions 80 to 175 (SVIAIVETVA…KISRLASGIP (96 aa)) constitute a Toprim domain.

This sequence belongs to the RecR family.

In terms of biological role, may play a role in DNA repair. It seems to be involved in an RecBC-independent recombinational process of DNA repair. It may act with RecF and RecO. This is Recombination protein RecR from Rickettsia canadensis (strain McKiel).